We begin with the raw amino-acid sequence, 425 residues long: Serine--tRNA ligase (425 aa).

Residue 233-235 participates in L-serine binding; the sequence is TAE. Residue 264-266 coordinates ATP; sequence RRE. E287 provides a ligand contact to L-serine. Position 351–354 (351–354) interacts with ATP; sequence EISS. S387 is an L-serine binding site.

Belongs to the class-II aminoacyl-tRNA synthetase family. Type-1 seryl-tRNA synthetase subfamily. In terms of assembly, homodimer. The tRNA molecule binds across the dimer.

It is found in the cytoplasm. The catalysed reaction is tRNA(Ser) + L-serine + ATP = L-seryl-tRNA(Ser) + AMP + diphosphate + H(+). It carries out the reaction tRNA(Sec) + L-serine + ATP = L-seryl-tRNA(Sec) + AMP + diphosphate + H(+). It functions in the pathway aminoacyl-tRNA biosynthesis; selenocysteinyl-tRNA(Sec) biosynthesis; L-seryl-tRNA(Sec) from L-serine and tRNA(Sec): step 1/1. Catalyzes the attachment of serine to tRNA(Ser). Is also able to aminoacylate tRNA(Sec) with serine, to form the misacylated tRNA L-seryl-tRNA(Sec), which will be further converted into selenocysteinyl-tRNA(Sec). The protein is Serine--tRNA ligase of Thermotoga neapolitana (strain ATCC 49049 / DSM 4359 / NBRC 107923 / NS-E).